The chain runs to 246 residues: Flavin-dependent thymidylate synthase (246 aa).

The 225-residue stretch at 17–241 (VTVELVKHSA…PLTYAAFNTN (225 aa)) folds into the ThyX domain. FAD is bound by residues S69, 92-94 (RHR), and E101. DUMP-binding positions include 89 to 92 (EFMR), 101 to 105 (EESGR), and R173. The ThyX motif signature appears at 92 to 103 (RHRVGWSYNEES). Residues 189 to 191 (NAR) and H195 contribute to the FAD site. DUMP is bound at residue R200. The active-site Involved in ionization of N3 of dUMP, leading to its activation is the R200.

Belongs to the thymidylate synthase ThyX family. In terms of assembly, homotetramer. Requires FAD as cofactor.

It carries out the reaction dUMP + (6R)-5,10-methylene-5,6,7,8-tetrahydrofolate + NADPH + H(+) = dTMP + (6S)-5,6,7,8-tetrahydrofolate + NADP(+). The protein operates within pyrimidine metabolism; dTTP biosynthesis. In terms of biological role, catalyzes the reductive methylation of 2'-deoxyuridine-5'-monophosphate (dUMP) to 2'-deoxythymidine-5'-monophosphate (dTMP) while utilizing 5,10-methylenetetrahydrofolate (mTHF) as the methyl donor, and NADPH and FADH(2) as the reductant. The sequence is that of Flavin-dependent thymidylate synthase from Streptomyces avermitilis (strain ATCC 31267 / DSM 46492 / JCM 5070 / NBRC 14893 / NCIMB 12804 / NRRL 8165 / MA-4680).